The sequence spans 208 residues: MTHNFLLKASLLYKDICPEQSRFLLQRHQSTAAALPQSIICPFCFEWRKLGNHHVRLRPKRKPTARIRRLLKRESAGKRLSAEQTAVLQKFKRASNAMMATCHTCNKVSRQPGMNRELLVSLSKHKSTPGSASKHRTPQTVNWATPKSVANRTPSSTPRSASSNTSSSSSSKSSSVKSSPFARLKKILMLENKQQGKKGGLKDFLSSL.

Residues 123–137 are compositionally biased toward basic residues; that stretch reads SKHKSTPGSASKHRT. Disordered regions lie at residues 123–180 and 189–208; these read SKHK…KSSP and MLENKQQGKKGGLKDFLSSL. A compositionally biased stretch (polar residues) spans 138-152; that stretch reads PQTVNWATPKSVANR. A compositionally biased stretch (low complexity) spans 153 to 180; the sequence is TPSSTPRSASSNTSSSSSSKSSSVKSSP.

The protein belongs to the UPF0711 family.

This chain is UPF0711 protein C18orf21 homolog, found in Danio rerio (Zebrafish).